A 119-amino-acid polypeptide reads, in one-letter code: uncharacterized protein (119 aa).

The active site involves Cys13.

The protein belongs to the ArsC family.

This is an uncharacterized protein from Escherichia coli (strain K12).